A 402-amino-acid polypeptide reads, in one-letter code: Exodeoxyribonuclease 7 large subunit (402 aa).

The protein belongs to the XseA family. As to quaternary structure, heterooligomer composed of large and small subunits.

The protein resides in the cytoplasm. The catalysed reaction is Exonucleolytic cleavage in either 5'- to 3'- or 3'- to 5'-direction to yield nucleoside 5'-phosphates.. Functionally, bidirectionally degrades single-stranded DNA into large acid-insoluble oligonucleotides, which are then degraded further into small acid-soluble oligonucleotides. The polypeptide is Exodeoxyribonuclease 7 large subunit (Streptomyces coelicolor (strain ATCC BAA-471 / A3(2) / M145)).